The chain runs to 165 residues: Small ribosomal subunit protein eS10 (165 aa).

Tyr-12 is modified (phosphotyrosine). A disordered region spans residues 90–165 (VPATLRRSRP…FGRGRGQPPQ (76 aa)). Positions 97 to 128 (SRPETGRPRPKGPEGERPARFTRGEADRDTYR) are enriched in basic and acidic residues. Residues Lys-138 and Lys-139 each participate in a glycyl lysine isopeptide (Lys-Gly) (interchain with G-Cter in ubiquitin) cross-link. A Phosphoserine modification is found at Ser-146. Arg-153 carries the post-translational modification Omega-N-methylarginine. The span at 154 to 165 (GGFGRGRGQPPQ) shows a compositional bias: gly residues. 2 positions are modified to symmetric dimethylarginine: Arg-158 and Arg-160.

Belongs to the eukaryotic ribosomal protein eS10 family. Component of the small ribosomal subunit. The methylated form interacts with NPM1. In terms of processing, methylated by PRMT5. Methylation is necessary for its interaction with NPS1, its localization in the granular component (GC) region of the nucleolus, for the proper assembly of ribosomes, protein synthesis and optimal cell proliferation. Post-translationally, monoubiquitinated by ZNF598 when a ribosome has stalled during translation of poly(A) sequences, leading to preclude synthesis of a long poly-lysine tail and initiate the ribosome quality control (RQC) pathway to degrade the potentially detrimental aberrant nascent polypeptide. Deubiquitinated by OTUD3 and USP21, antagonizing ZNF598 activity. Deubiquitinated by OTUD1, antagonizing ZNF598 activity and stimulating formation of polysomes: deubiquitination by OTUD1 promotes stability and translation of a subset mRNAs with a high abundance of rare codons can limit the translation rate. Deubiquitinated by USP10.

It is found in the cytoplasm. It localises to the nucleus. The protein localises to the nucleolus. In terms of biological role, component of the 40S ribosomal subunit. The ribosome is a large ribonucleoprotein complex responsible for the synthesis of proteins in the cell. The polypeptide is Small ribosomal subunit protein eS10 (Rps10) (Rattus norvegicus (Rat)).